A 269-amino-acid polypeptide reads, in one-letter code: ATP synthase subunit delta (269 aa).

The protein belongs to the ATPase delta chain family. As to quaternary structure, F-type ATPases have 2 components, F(1) - the catalytic core - and F(0) - the membrane proton channel. F(1) has five subunits: alpha(3), beta(3), gamma(1), delta(1), epsilon(1). F(0) has three main subunits: a(1), b(2) and c(10-14). The alpha and beta chains form an alternating ring which encloses part of the gamma chain. F(1) is attached to F(0) by a central stalk formed by the gamma and epsilon chains, while a peripheral stalk is formed by the delta and b chains.

It localises to the cell membrane. In terms of biological role, f(1)F(0) ATP synthase produces ATP from ADP in the presence of a proton or sodium gradient. F-type ATPases consist of two structural domains, F(1) containing the extramembraneous catalytic core and F(0) containing the membrane proton channel, linked together by a central stalk and a peripheral stalk. During catalysis, ATP synthesis in the catalytic domain of F(1) is coupled via a rotary mechanism of the central stalk subunits to proton translocation. This protein is part of the stalk that links CF(0) to CF(1). It either transmits conformational changes from CF(0) to CF(1) or is implicated in proton conduction. This Thermobifida fusca (strain YX) protein is ATP synthase subunit delta.